The primary structure comprises 501 residues: ATP synthase subunit alpha, chloroplastic (501 aa).

170-177 is an ATP binding site; it reads GDRQTGKT.

This sequence belongs to the ATPase alpha/beta chains family. As to quaternary structure, F-type ATPases have 2 components, CF(1) - the catalytic core - and CF(0) - the membrane proton channel. CF(1) has five subunits: alpha(3), beta(3), gamma(1), delta(1), epsilon(1). CF(0) has four main subunits: a, b, b' and c.

It localises to the plastid. The protein localises to the chloroplast thylakoid membrane. The enzyme catalyses ATP + H2O + 4 H(+)(in) = ADP + phosphate + 5 H(+)(out). Its function is as follows. Produces ATP from ADP in the presence of a proton gradient across the membrane. The alpha chain is a regulatory subunit. The chain is ATP synthase subunit alpha, chloroplastic from Nephroselmis olivacea (Green alga).